The chain runs to 227 residues: Venom allergen 5 (227 aa).

Positions 1-21 are cleaved as a signal peptide; the sequence is MKISCLICLVIVLTIIHLSQA. Intrachain disulfides connect Cys-25/Cys-37, Cys-29/Cys-125, Cys-49/Cys-117, and Cys-193/Cys-210. The region spanning 69-212 is the SCP domain; that stretch reads EEHNRFRQKV…MQIHYLICNY (144 aa).

The protein belongs to the CRISP family. Venom allergen 5-like subfamily. As to expression, expressed by the venom gland.

The protein resides in the secreted. The protein is Venom allergen 5 of Polistes dominula (European paper wasp).